A 115-amino-acid polypeptide reads, in one-letter code: Thiosulfate:glutathione sulfurtransferase (115 aa).

Residues 17-115 enclose the Rhodanese domain; it reads ASGRARLFDV…AYREWLEKES (99 aa). Catalysis depends on cysteine 79, which acts as the Cysteine persulfide intermediate.

In terms of tissue distribution, highly expressed in kidney, liver and skeletal muscle. Lower levels of expression in heart, colon, thymus, spleen, placenta and lung. Weakly expressed in brain, small intestine and peripheral blood leukocytes. Expressed at high levels in the breast carcinoma cell lines MCF-7 and MDA-MB-468 and at a lower level in the breast carcinoma cell line MDA-MB-231, the colon carcinoma call line LoVo and the lung carcinoma cell line A-549. No expression in the cell lines EFO-27 and HeLa, or the normal breast tissue cell lines MCF-10A and H184A1. Detected in invasive ductal carcinoma, but not in the adjacent tissues.

Its subcellular location is the cytoplasm. It localises to the perinuclear region. It carries out the reaction thiosulfate + glutathione = S-sulfanylglutathione + sulfite + H(+). The catalysed reaction is thiosulfate + 2 glutathione = glutathione disulfide + hydrogen sulfide + sulfite + 2 H(+). Its activity is regulated as follows. GSS(-) is a potent inhibitor of TSTD1, since the presence of the sulfur dioxygenase (SDO) strongly increases the TSTD1 catalytic activity. In terms of biological role, thiosulfate:glutathione sulfurtransferase (TST) required to produce S-sulfanylglutathione (GSS(-)), a central intermediate in hydrogen sulfide metabolism. Provides the link between the first step in mammalian H(2)S metabolism performed by the sulfide:quinone oxidoreductase (SQOR) which catalyzes the conversion of H(2)S to thiosulfate, and the sulfur dioxygenase (SDO) which uses GSS(-) as substrate. The thermodynamic coupling of the irreversible SDO and reversible TST reactions provides a model for the physiologically relevant reaction with thiosulfate as the sulfane donor. GSS(-) spontaneously reacts with glutathione to form glutathione disulfide. This Homo sapiens (Human) protein is Thiosulfate:glutathione sulfurtransferase (TSTD1).